The following is a 215-amino-acid chain: Large ribosomal subunit protein bL25 (215 aa).

Positions 160 to 215 are disordered; the sequence is GDLPLPEGSELVTEPEETVMSVVAPETEEEPDTEEDEEGEEDVEEESEEEEEESEE. The segment covering 185-215 has biased composition (acidic residues); it reads ETEEEPDTEEDEEGEEDVEEESEEEEEESEE.

Belongs to the bacterial ribosomal protein bL25 family. CTC subfamily. Part of the 50S ribosomal subunit; part of the 5S rRNA/L5/L18/L25 subcomplex. Contacts the 5S rRNA. Binds to the 5S rRNA independently of L5 and L18.

Its function is as follows. This is one of the proteins that binds to the 5S RNA in the ribosome where it forms part of the central protuberance. The sequence is that of Large ribosomal subunit protein bL25 from Natranaerobius thermophilus (strain ATCC BAA-1301 / DSM 18059 / JW/NM-WN-LF).